A 588-amino-acid polypeptide reads, in one-letter code: MSSCVSSQPTSDRVAPQDELGSGGGSREGQKPCEALRGLSSLSIHLGMESFIVVTECEPGRGVDLNLARDQPPEADGQELPLEASDPESRSPLSGRKMSLQEPSQGGPASSSNSLDMNGRCICPSLSYSPASSPQSSPRMPRRPTVESHHVSITGLQDCVQLNQYTLKDEIGKGSYGVVKLAYNENDNTYYAMKVLSKKKLIRQAGFPRRPPPRGARPAPGGCIQPRGPIEQVYQEIAILKKLDHPNVVKLVEVLDDPNEDHLYMVFELVNQGPVMEVPTLKPLSEDQARFYFQDLIKGIEYLHYQKIIHRDIKPSNLLVGEDGHIKIADFGVSNEFKGSDALLSNTVGTPAFMAPESLSETRKIFSGKALDVWAMGVTLYCFVFGQCPFMDERIMCLHSKIKSQALEFPDQPDIAEDLKDLITRMLDKNPESRIVVPEIKLHPWVTRHGAEPLPSEDENCTLVEVTEEEVENSVKHIPSLATVILVKTMIRKRSFGNPFEGSRREERSLSAPGNLLTKKPTREWEPLSEPKEARQRRQPPGPRAGPCGGGGSALVKGGPCVESWGAPAPGSPPRMPPLQPEEVMEPE.

Positions Met1–Ser11 are enriched in polar residues. Disordered stretches follow at residues Met1–Glu34 and Asp64–Glu147. Position 2 is an N-acetylserine (Ser2). Phosphoserine is present on residues Ser99, Ser114, Ser129, Ser133, and Ser137. Over residues Gln101–Asp116 the composition is skewed to polar residues. The segment covering Pro124–Arg139 has biased composition (low complexity). A Protein kinase domain is found at Tyr165–Val446. ATP is bound by residues Ile171–Val179 and Lys194. The interval Gln204–Pro226 is RP domain. A disordered region spans residues Ala205–Gln225. Catalysis depends on Asp312, which acts as the Proton acceptor. The interval Glu472–His477 is autoinhibitory domain. A calmodulin-binding region spans residues Val475–Phe500. Phosphoserine occurs at positions 495, 511, 522, and 572. Positions Gly497–Glu588 are disordered. A compositionally biased stretch (basic and acidic residues) spans Pro521–Gln536. A compositionally biased stretch (pro residues) spans Pro570–Gln580.

It belongs to the protein kinase superfamily. Ser/Thr protein kinase family. Interacts with calmodulin. In terms of processing, autophosphorylated and phosphorylated by PKA. Each isoform may show a different pattern of phosphorylation. As to expression, expressed in all tissues tested. A differential expression pattern compared to CAMKK1 is observed in the brain.

It is found in the nucleus. Its subcellular location is the cytoplasm. It localises to the cell projection. The protein resides in the neuron projection. It catalyses the reaction L-seryl-[protein] + ATP = O-phospho-L-seryl-[protein] + ADP + H(+). The enzyme catalyses L-threonyl-[protein] + ATP = O-phospho-L-threonyl-[protein] + ADP + H(+). Its activity is regulated as follows. Activated by Ca(2+)/calmodulin. Binding of calmodulin may relieve intrasteric autoinhibition. Autophosphorylation does not alter activity or regulation by Ca(2+)/calmodulin. In part, activity is independent on Ca(2+)/calmodulin. Calcium/calmodulin-dependent protein kinase belonging to a proposed calcium-triggered signaling cascade involved in a number of cellular processes. Phosphorylates CAMK1, CAMK4 and CAMK1D. Efficiently phosphorylates 5'-AMP-activated protein kinase (AMPK) trimer, including that consisting of PRKAA1, PRKAB1 and PRKAG1. This phosphorylation is stimulated in response to Ca(2+) signals. May play a role in neurite growth. Isoform 2 may promote neurite elongation, while isoform 1 may promoter neurite branching. May be involved in hippocampal activation of CREB1. The polypeptide is Calcium/calmodulin-dependent protein kinase kinase 2 (Camkk2) (Mus musculus (Mouse)).